We begin with the raw amino-acid sequence, 658 residues long: Integrator complex subunit 9 (658 aa).

The 1D-myo-inositol hexakisphosphate site is built by K2 and F19. K58 participates in a covalent cross-link: Glycyl lysine isopeptide (Lys-Gly) (interchain with G-Cter in SUMO2). 1D-myo-inositol hexakisphosphate is bound by residues K510 and R511. The tract at residues 548-574 (DNKHLLQPPPRPAQPTSGKKRKRVSDD) is disordered. The Nuclear localization signal signature appears at 566 to 570 (KKRKR).

Belongs to the metallo-beta-lactamase superfamily. RNA-metabolizing metallo-beta-lactamase-like family. INTS9 subfamily. Component of the Integrator complex, composed of core subunits INTS1, INTS2, INTS3, INTS4, INTS5, INTS6, INTS7, INTS8, INTS9/RC74, INTS10, INTS11/CPSF3L, INTS12, INTS13, INTS14 and INTS15. The core complex associates with protein phosphatase 2A subunits PPP2CA and PPP2R1A, to form the Integrator-PP2A (INTAC) complex. INTS9 is part of the RNA endonuclease subcomplex, composed of INTS4, INTS9, INTS11 and inositol hexakisphosphate (InsP6). Interacts with WDR73; interaction is required for the assembly of the RNA endonuclease subcomplex in the cytoplasm. Interacts with BRAT1; interaction is required for the assembly of the RNA endonuclease subcomplex. Interacts with ESRRB, ESRRB is not a core component of the Integrator complex and this association is a bridge for the interaction with the multiprotein complex Integrator; attracts the transcriptional machinery.

Its subcellular location is the nucleus. It localises to the cytoplasm. Its function is as follows. Component of the integrator complex, a multiprotein complex that terminates RNA polymerase II (Pol II) transcription in the promoter-proximal region of genes. The integrator complex provides a quality checkpoint during transcription elongation by driving premature transcription termination of transcripts that are unfavorably configured for transcriptional elongation: the complex terminates transcription by (1) catalyzing dephosphorylation of the C-terminal domain (CTD) of Pol II subunit POLR2A/RPB1 and SUPT5H/SPT5, (2) degrading the exiting nascent RNA transcript via endonuclease activity and (3) promoting the release of Pol II from bound DNA. The integrator complex is also involved in terminating the synthesis of non-coding Pol II transcripts, such as enhancer RNAs (eRNAs), small nuclear RNAs (snRNAs), telomerase RNAs and long non-coding RNAs (lncRNAs). Mediates recruitment of cytoplasmic dynein to the nuclear envelope, probably as component of the integrator complex. The sequence is that of Integrator complex subunit 9 from Homo sapiens (Human).